The following is a 73-amino-acid chain: uncharacterized protein (73 aa).

Residues 54 to 72 form a helical membrane-spanning segment; it reads VSFIVAPTVMQVQCLFFFI.

It localises to the membrane. This is an uncharacterized protein from Saccharomyces cerevisiae (strain ATCC 204508 / S288c) (Baker's yeast).